A 241-amino-acid polypeptide reads, in one-letter code: Small ribosomal subunit protein eS4 (241 aa).

Residues 37–100 (LPIVVWARDQ…GKHYRILRDK (64 aa)) form the S4 RNA-binding domain.

The protein belongs to the eukaryotic ribosomal protein eS4 family.

The polypeptide is Small ribosomal subunit protein eS4 (Methanospirillum hungatei JF-1 (strain ATCC 27890 / DSM 864 / NBRC 100397 / JF-1)).